We begin with the raw amino-acid sequence, 172 residues long: Adenine phosphoribosyltransferase (172 aa).

It belongs to the purine/pyrimidine phosphoribosyltransferase family. As to quaternary structure, homodimer.

Its subcellular location is the cytoplasm. The catalysed reaction is AMP + diphosphate = 5-phospho-alpha-D-ribose 1-diphosphate + adenine. The protein operates within purine metabolism; AMP biosynthesis via salvage pathway; AMP from adenine: step 1/1. Functionally, catalyzes a salvage reaction resulting in the formation of AMP, that is energically less costly than de novo synthesis. This is Adenine phosphoribosyltransferase from Clostridium botulinum (strain Alaska E43 / Type E3).